A 550-amino-acid polypeptide reads, in one-letter code: Chaperonin GroEL (550 aa).

ATP is bound by residues 30 to 33 (TLGP), Lys-51, 87 to 91 (DGTTT), Gly-415, 479 to 481 (NAA), and Asp-495.

The protein belongs to the chaperonin (HSP60) family. As to quaternary structure, forms a cylinder of 14 subunits composed of two heptameric rings stacked back-to-back. Interacts with the co-chaperonin GroES.

The protein resides in the cytoplasm. It carries out the reaction ATP + H2O + a folded polypeptide = ADP + phosphate + an unfolded polypeptide.. In terms of biological role, together with its co-chaperonin GroES, plays an essential role in assisting protein folding. The GroEL-GroES system forms a nano-cage that allows encapsulation of the non-native substrate proteins and provides a physical environment optimized to promote and accelerate protein folding. This chain is Chaperonin GroEL, found in Marinobacter nauticus (strain ATCC 700491 / DSM 11845 / VT8) (Marinobacter aquaeolei).